Consider the following 110-residue polypeptide: Nucleoid-associated protein SYO3AOP1_1366 (110 aa).

It belongs to the YbaB/EbfC family. Homodimer.

The protein localises to the cytoplasm. The protein resides in the nucleoid. Its function is as follows. Binds to DNA and alters its conformation. May be involved in regulation of gene expression, nucleoid organization and DNA protection. The polypeptide is Nucleoid-associated protein SYO3AOP1_1366 (Sulfurihydrogenibium sp. (strain YO3AOP1)).